The sequence spans 717 residues: Ribosomal RNA large subunit methyltransferase K/L (717 aa).

Positions 44-155 (DAYKVCIYSY…KQFVNVFLCL (112 aa)) constitute a THUMP domain.

The protein belongs to the methyltransferase superfamily. RlmKL family.

The protein localises to the cytoplasm. The enzyme catalyses guanosine(2445) in 23S rRNA + S-adenosyl-L-methionine = N(2)-methylguanosine(2445) in 23S rRNA + S-adenosyl-L-homocysteine + H(+). It catalyses the reaction guanosine(2069) in 23S rRNA + S-adenosyl-L-methionine = N(2)-methylguanosine(2069) in 23S rRNA + S-adenosyl-L-homocysteine + H(+). In terms of biological role, specifically methylates the guanine in position 2445 (m2G2445) and the guanine in position 2069 (m7G2069) of 23S rRNA. This Francisella tularensis subsp. tularensis (strain SCHU S4 / Schu 4) protein is Ribosomal RNA large subunit methyltransferase K/L.